The sequence spans 264 residues: S-adenosylmethionine decarboxylase proenzyme (264 aa).

Serine 113 acts as the Schiff-base intermediate with substrate; via pyruvic acid in catalysis. Serine 113 is modified (pyruvic acid (Ser); by autocatalysis). Histidine 118 serves as the catalytic Proton acceptor; for processing activity. Cysteine 141 (proton donor; for catalytic activity) is an active-site residue.

It belongs to the prokaryotic AdoMetDC family. Type 2 subfamily. Heterooctamer of four alpha and four beta chains arranged as a tetramer of alpha/beta heterodimers. Pyruvate serves as cofactor. In terms of processing, is synthesized initially as an inactive proenzyme. Formation of the active enzyme involves a self-maturation process in which the active site pyruvoyl group is generated from an internal serine residue via an autocatalytic post-translational modification. Two non-identical subunits are generated from the proenzyme in this reaction, and the pyruvate is formed at the N-terminus of the alpha chain, which is derived from the carboxyl end of the proenzyme. The post-translation cleavage follows an unusual pathway, termed non-hydrolytic serinolysis, in which the side chain hydroxyl group of the serine supplies its oxygen atom to form the C-terminus of the beta chain, while the remainder of the serine residue undergoes an oxidative deamination to produce ammonia and the pyruvoyl group blocking the N-terminus of the alpha chain.

The catalysed reaction is S-adenosyl-L-methionine + H(+) = S-adenosyl 3-(methylsulfanyl)propylamine + CO2. It functions in the pathway amine and polyamine biosynthesis; S-adenosylmethioninamine biosynthesis; S-adenosylmethioninamine from S-adenosyl-L-methionine: step 1/1. Catalyzes the decarboxylation of S-adenosylmethionine to S-adenosylmethioninamine (dcAdoMet), the propylamine donor required for the synthesis of the polyamines spermine and spermidine from the diamine putrescine. This Stenotrophomonas maltophilia (strain K279a) protein is S-adenosylmethionine decarboxylase proenzyme.